A 169-amino-acid polypeptide reads, in one-letter code: uncharacterized protein (169 aa).

The HTH asnC-type domain occupies 18-79 (LDRADVALLN…IVSPKAVGRP (62 aa)). The H-T-H motif DNA-binding region spans 37–56 (SEELADKVGLSPTACQRRLK).

This is an uncharacterized protein from Sinorhizobium fredii (strain NBRC 101917 / NGR234).